A 347-amino-acid chain; its full sequence is Bifunctional dihydroflavonol 4-reductase/flavanone 4-reductase (347 aa).

Lysine 44 and tyrosine 163 together coordinate NADP(+).

This sequence belongs to the NAD(P)-dependent epimerase/dehydratase family. Dihydroflavonol-4-reductase subfamily.

It catalyses the reaction a (2R,3S,4S)-leucoanthocyanidin + NADP(+) = a (2R,3R)-dihydroflavonol + NADPH + H(+). It carries out the reaction (2S)-flavan-4-ol + NADP(+) = (2S)-flavanone + NADPH + H(+). In terms of biological role, bifunctional enzyme involved in the flavonoid metabolism. May use dihydroquercetin, eriodictyol, garbanzol (5-deoxydihydrokaempferol), dihydrofisetin (5-deoxydihydroquercetin), dihydrokaempferol to a low extent (5%), but not naringenin, 5-deoxynaringenin or butin (5-deoxyeriodictyol) as substrate. The polypeptide is Bifunctional dihydroflavonol 4-reductase/flavanone 4-reductase (DFR) (Pyrus communis (Pear)).